A 98-amino-acid chain; its full sequence is Integration host factor subunit beta (98 aa).

The protein belongs to the bacterial histone-like protein family. As to quaternary structure, heterodimer of an alpha and a beta chain.

Its function is as follows. This protein is one of the two subunits of integration host factor, a specific DNA-binding protein that functions in genetic recombination as well as in transcriptional and translational control. The protein is Integration host factor subunit beta of Pseudomonas syringae pv. tomato (strain ATCC BAA-871 / DC3000).